The chain runs to 107 residues: Large ribosomal subunit protein uL24 (107 aa).

This sequence belongs to the universal ribosomal protein uL24 family. Part of the 50S ribosomal subunit.

One of two assembly initiator proteins, it binds directly to the 5'-end of the 23S rRNA, where it nucleates assembly of the 50S subunit. Functionally, one of the proteins that surrounds the polypeptide exit tunnel on the outside of the subunit. This Coxiella burnetii (strain Dugway 5J108-111) protein is Large ribosomal subunit protein uL24.